We begin with the raw amino-acid sequence, 931 residues long: Bifunctional uridylyltransferase/uridylyl-removing enzyme (931 aa).

Residues M1–P383 form a uridylyltransferase region. The interval E384 to T739 is uridylyl-removing. The 124-residue stretch at V499 to L622 folds into the HD domain. 2 ACT domains span residues E740 to R822 and V851 to A931.

Belongs to the GlnD family. Requires Mg(2+) as cofactor.

It catalyses the reaction [protein-PII]-L-tyrosine + UTP = [protein-PII]-uridylyl-L-tyrosine + diphosphate. The enzyme catalyses [protein-PII]-uridylyl-L-tyrosine + H2O = [protein-PII]-L-tyrosine + UMP + H(+). Uridylyltransferase (UTase) activity is inhibited by glutamine, while glutamine activates uridylyl-removing (UR) activity. In terms of biological role, modifies, by uridylylation and deuridylylation, the PII regulatory proteins (GlnB and homologs), in response to the nitrogen status of the cell that GlnD senses through the glutamine level. Under low glutamine levels, catalyzes the conversion of the PII proteins and UTP to PII-UMP and PPi, while under higher glutamine levels, GlnD hydrolyzes PII-UMP to PII and UMP (deuridylylation). Thus, controls uridylylation state and activity of the PII proteins, and plays an important role in the regulation of nitrogen fixation and metabolism. This chain is Bifunctional uridylyltransferase/uridylyl-removing enzyme, found in Bradyrhizobium sp. (strain ORS 278).